We begin with the raw amino-acid sequence, 1939 residues long: Myosin-1 (1939 aa).

A Myosin N-terminal SH3-like domain is found at 33–82 (DAKTSVFVVDPKESFVKATVQSREGGKVTAKTEAGATVTVKDDQVFPMNP). Phosphothreonine is present on residues threonine 64 and threonine 69. A Myosin motor domain is found at 86–782 (DKIEDMAMMT…LLGLLEEMRD (697 aa)). Lysine 130 bears the N6,N6,N6-trimethyllysine mark. 179–186 (GESGAGKT) provides a ligand contact to ATP. Tyrosine 389 is subject to Phosphotyrosine. The residue at position 419 (threonine 419) is a Phosphothreonine. Position 424 is a phosphotyrosine (tyrosine 424). The tract at residues 659-681 (LNKLMTNLRSTHPHFVRCIIPNE) is actin-binding. At histidine 757 the chain carries Pros-methylhistidine. Residues 761–775 (KFGHTKVFFKAGLLG) are actin-binding. The IQ domain maps to 785-814 (LAQLITRTQAMCRGFLARVEYQKMVERRES). Residues 843-1939 (LLKSAETEKE…EVHTKIISEE (1097 aa)) are a coiled coil. A phosphoserine mark is found at serine 1092, serine 1096, serine 1162, and serine 1237. A Phosphothreonine modification is found at threonine 1241. A phosphoserine mark is found at serine 1243 and serine 1261. Threonine 1265 and threonine 1286 each carry phosphothreonine. Phosphoserine occurs at positions 1288, 1292, 1303, and 1306. Threonine 1467 is modified (phosphothreonine). Phosphoserine is present on serine 1474. Tyrosine 1492 carries the phosphotyrosine modification. The residue at position 1495 (serine 1495) is a Phosphoserine. At threonine 1501 the chain carries Phosphothreonine. At serine 1514 the chain carries Phosphoserine. The residue at position 1517 (threonine 1517) is a Phosphothreonine. Serine 1542, serine 1554, serine 1574, serine 1600, serine 1603, serine 1714, and serine 1726 each carry phosphoserine. Phosphothreonine occurs at positions 1730 and 1736. Serine 1739 bears the Phosphoserine mark.

It belongs to the TRAFAC class myosin-kinesin ATPase superfamily. Myosin family. Muscle myosin is a hexameric protein that consists of 2 heavy chain subunits (MHC), 2 alkali light chain subunits (MLC) and 2 regulatory light chain subunits (MLC-2). Interacts with SLC26A5.

The protein resides in the cytoplasm. Its subcellular location is the myofibril. Functionally, required for normal hearing. It plays a role in cochlear amplification of auditory stimuli, likely through the positive regulation of prestin (SLC26A5) activity and outer hair cell (OHC) electromotility. The chain is Myosin-1 from Homo sapiens (Human).